The following is a 510-amino-acid chain: Light-independent protochlorophyllide reductase subunit B (510 aa).

Asp36 provides a ligand contact to [4Fe-4S] cluster. Asp296 acts as the Proton donor in catalysis. Substrate is bound at residue 431–432; the sequence is GM.

This sequence belongs to the ChlB/BchB/BchZ family. In terms of assembly, protochlorophyllide reductase is composed of three subunits; ChlL, ChlN and ChlB. Forms a heterotetramer of two ChlB and two ChlN subunits. [4Fe-4S] cluster is required as a cofactor.

The catalysed reaction is chlorophyllide a + oxidized 2[4Fe-4S]-[ferredoxin] + 2 ADP + 2 phosphate = protochlorophyllide a + reduced 2[4Fe-4S]-[ferredoxin] + 2 ATP + 2 H2O. The protein operates within porphyrin-containing compound metabolism; chlorophyll biosynthesis (light-independent). Component of the dark-operative protochlorophyllide reductase (DPOR) that uses Mg-ATP and reduced ferredoxin to reduce ring D of protochlorophyllide (Pchlide) to form chlorophyllide a (Chlide). This reaction is light-independent. The NB-protein (ChlN-ChlB) is the catalytic component of the complex. The polypeptide is Light-independent protochlorophyllide reductase subunit B (Synechococcus sp. (strain JA-2-3B'a(2-13)) (Cyanobacteria bacterium Yellowstone B-Prime)).